A 220-amino-acid chain; its full sequence is GTP cyclohydrolase 1 (220 aa).

Zn(2+) contacts are provided by cysteine 110, histidine 113, and cysteine 181.

The protein belongs to the GTP cyclohydrolase I family. In terms of assembly, toroid-shaped homodecamer, composed of two pentamers of five dimers.

The catalysed reaction is GTP + H2O = 7,8-dihydroneopterin 3'-triphosphate + formate + H(+). It functions in the pathway cofactor biosynthesis; 7,8-dihydroneopterin triphosphate biosynthesis; 7,8-dihydroneopterin triphosphate from GTP: step 1/1. The chain is GTP cyclohydrolase 1 from Baumannia cicadellinicola subsp. Homalodisca coagulata.